A 177-amino-acid polypeptide reads, in one-letter code: Keratin-associated protein 1-1 (177 aa).

It belongs to the KRTAP type 1 family. As to quaternary structure, interacts with hair keratins. In terms of tissue distribution, expressed in the middle/upper portions of the hair cortex, in the region termed the keratogenous zone.

In the hair cortex, hair keratin intermediate filaments are embedded in an interfilamentous matrix, consisting of hair keratin-associated proteins (KRTAP), which are essential for the formation of a rigid and resistant hair shaft through their extensive disulfide bond cross-linking with abundant cysteine residues of hair keratins. The matrix proteins include the high-sulfur and high-glycine-tyrosine keratins. The polypeptide is Keratin-associated protein 1-1 (KRTAP1-1) (Homo sapiens (Human)).